The primary structure comprises 472 residues: Flap endonuclease 1 (472 aa).

The interval 1–106 (MGIKGLARFL…EELMKRKERR (106 aa)) is N-domain. Aspartate 34 is a binding site for Mg(2+). Residues arginine 47 and arginine 72 each contribute to the DNA site. Mg(2+) contacts are provided by aspartate 88, glutamate 160, glutamate 162, aspartate 181, and aspartate 183. Residues 124-263 (TIRKQLIRTI…LTAYKLLKKH (140 aa)) form an I-domain region. Glutamate 160 contacts DNA. Residues glycine 241 and aspartate 243 each coordinate DNA. Aspartate 243 lines the Mg(2+) pocket. An interaction with PCNA region spans residues 348 to 356 (AQTSLDSFF).

This sequence belongs to the XPG/RAD2 endonuclease family. FEN1 subfamily. In terms of assembly, interacts with PCNA. Three molecules of FEN1 bind to one PCNA trimer with each molecule binding to one PCNA monomer. PCNA stimulates the nuclease activity without altering cleavage specificity. Mg(2+) is required as a cofactor. In terms of processing, phosphorylated. Phosphorylation upon DNA damage induces relocalization to the nuclear plasma.

It localises to the nucleus. The protein resides in the nucleolus. Its subcellular location is the nucleoplasm. The protein localises to the mitochondrion. Structure-specific nuclease with 5'-flap endonuclease and 5'-3' exonuclease activities involved in DNA replication and repair. During DNA replication, cleaves the 5'-overhanging flap structure that is generated by displacement synthesis when DNA polymerase encounters the 5'-end of a downstream Okazaki fragment. It enters the flap from the 5'-end and then tracks to cleave the flap base, leaving a nick for ligation. Also involved in the long patch base excision repair (LP-BER) pathway, by cleaving within the apurinic/apyrimidinic (AP) site-terminated flap. Acts as a genome stabilization factor that prevents flaps from equilibrating into structures that lead to duplications and deletions. Also possesses 5'-3' exonuclease activity on nicked or gapped double-stranded DNA, and exhibits RNase H activity. Also involved in replication and repair of rDNA and in repairing mitochondrial DNA. The sequence is that of Flap endonuclease 1 from Cryptosporidium muris (strain RN66).